An 82-amino-acid polypeptide reads, in one-letter code: uncharacterized protein (82 aa).

The next 2 membrane-spanning stretches (helical) occupy residues 8-28 and 50-70; these read LTTA…LPAP and LYTL…YFVL.

The protein localises to the cell membrane. This is an uncharacterized protein from Escherichia coli (strain K12).